A 217-amino-acid chain; its full sequence is Adenylate kinase (217 aa).

Residue 10–15 (GIGKGT) participates in ATP binding. The segment at 30–59 (STGDIFRKNFKENTELGTLSKKFIAQGLLV) is NMP. AMP-binding positions include threonine 31, arginine 36, 57–59 (LLV), 85–88 (GFPR), and glutamine 92. Residues 126–163 (GRRICPECGKVYHIEKIPPKNPGICDKDQKTLIQREDD) are LID. Arginine 127 lines the ATP pocket. Zn(2+)-binding residues include cysteine 130 and cysteine 133. 136-137 (VY) is an ATP binding site. Residues cysteine 150 and aspartate 153 each coordinate Zn(2+). AMP contacts are provided by arginine 160 and arginine 171. Residue glutamine 199 coordinates ATP.

It belongs to the adenylate kinase family. Monomer.

The protein localises to the cytoplasm. The enzyme catalyses AMP + ATP = 2 ADP. It participates in purine metabolism; AMP biosynthesis via salvage pathway; AMP from ADP: step 1/1. In terms of biological role, catalyzes the reversible transfer of the terminal phosphate group between ATP and AMP. Plays an important role in cellular energy homeostasis and in adenine nucleotide metabolism. In Aster yellows witches'-broom phytoplasma (strain AYWB), this protein is Adenylate kinase.